The primary structure comprises 222 residues: N-acetyltransferase 8F1 (222 aa).

Residues 53-73 form a helical membrane-spanning segment; sequence LVLVSGSWILAVICIFFLLLL. Residues 69–220 form the N-acetyltransferase domain; that stretch reads FLLLLLRLLA…CTIQLKYSFP (152 aa).

It belongs to the camello family.

Its subcellular location is the membrane. Functionally, may play a role in regulation of gastrulation. The chain is N-acetyltransferase 8F1 from Mus musculus (Mouse).